We begin with the raw amino-acid sequence, 63 residues long: Male-specific sperm protein Mst84Da (63 aa).

Belongs to the MST(3)CGP family. In terms of tissue distribution, testis.

The sequence is that of Male-specific sperm protein Mst84Da (Mst84Da) from Drosophila melanogaster (Fruit fly).